A 512-amino-acid chain; its full sequence is ATP synthase subunit beta 2 (512 aa).

Residue 174-181 participates in ATP binding; that stretch reads GGAGVGKT. Positions 479–494 are enriched in basic and acidic residues; the sequence is RRKEEAAREADARRDA. Positions 479–512 are disordered; that stretch reads RRKEEAAREADARRDAAAGAASGSAGPQGAQHGR.

This sequence belongs to the ATPase alpha/beta chains family. F-type ATPases have 2 components, CF(1) - the catalytic core - and CF(0) - the membrane proton channel. CF(1) has five subunits: alpha(3), beta(3), gamma(1), delta(1), epsilon(1). CF(0) has three main subunits: a(1), b(2) and c(9-12). The alpha and beta chains form an alternating ring which encloses part of the gamma chain. CF(1) is attached to CF(0) by a central stalk formed by the gamma and epsilon chains, while a peripheral stalk is formed by the delta and b chains.

It is found in the cell inner membrane. The enzyme catalyses ATP + H2O + 4 H(+)(in) = ADP + phosphate + 5 H(+)(out). Produces ATP from ADP in the presence of a proton gradient across the membrane. The catalytic sites are hosted primarily by the beta subunits. This is ATP synthase subunit beta 2 from Burkholderia thailandensis (strain ATCC 700388 / DSM 13276 / CCUG 48851 / CIP 106301 / E264).